We begin with the raw amino-acid sequence, 384 residues long: MASSLKKLISSFLLVLYSTTIIVASSESRCRRFKSIISFGDSIADTGNYLHLSDVNHLPQSAFLPYGESFFHPPSGRASNGRLIIDFIAEFLGLPYVPPYFGSQNVSFEQGINFAVYGATALDRAFLLGKGIESDFTNVSLSVQLDTFKQILPNLCASSTRDCKEMLGDSLILMGEIGGNDYNYPFFEGKSINEIKELVPLIVKAISSAIVDLIDLGGKTFLVPGGFPTGCSAAYLTLFQTVAEKDQDPLTGCYPLLNEFGEHHNEQLKTELKRLQKFYPHVNIIYADYHNSLYRFYQEPAKYGFKNKPLAACCGVGGKYNFTIGKECGYEGVNYCQNPSEYVNWDGYHLTEAAYQKMTEGILNGPYATPAFDWSCLGSGTVDT.

The first 24 residues, 1-24 (MASSLKKLISSFLLVLYSTTIIVA), serve as a signal peptide directing secretion. The active-site Nucleophile is the Ser42. N-linked (GlcNAc...) asparagine glycosylation is found at Asn105, Asn138, and Asn321. Residues Asp346 and His349 contribute to the active site.

It belongs to the 'GDSL' lipolytic enzyme family.

It is found in the secreted. This chain is GDSL esterase/lipase At1g28670, found in Arabidopsis thaliana (Mouse-ear cress).